The chain runs to 65 residues: Small ribosomal subunit protein eS31 (65 aa).

Zn(2+) contacts are provided by Cys36, Cys39, Cys55, and Cys58. The C4-type zinc-finger motif lies at 36–58 (CPKCGSVMAFHREPVPRWHCGKC).

It belongs to the eukaryotic ribosomal protein eS31 family. In terms of assembly, part of the 30S ribosomal subunit. Requires Zn(2+) as cofactor.

This chain is Small ribosomal subunit protein eS31, found in Pyrobaculum calidifontis (strain DSM 21063 / JCM 11548 / VA1).